We begin with the raw amino-acid sequence, 35 residues long: MEALVYTFLLVSTLGIIFFAIFFREPPKVPTKRMK.

Residues 3-23 (ALVYTFLLVSTLGIIFFAIFF) form a helical membrane-spanning segment.

This sequence belongs to the PsbT family. As to quaternary structure, PSII is composed of 1 copy each of membrane proteins PsbA, PsbB, PsbC, PsbD, PsbE, PsbF, PsbH, PsbI, PsbJ, PsbK, PsbL, PsbM, PsbT, PsbY, PsbZ, Psb30/Ycf12, at least 3 peripheral proteins of the oxygen-evolving complex and a large number of cofactors. It forms dimeric complexes.

The protein localises to the plastid. Its subcellular location is the chloroplast thylakoid membrane. Found at the monomer-monomer interface of the photosystem II (PS II) dimer, plays a role in assembly and dimerization of PSII. PSII is a light-driven water plastoquinone oxidoreductase, using light energy to abstract electrons from H(2)O, generating a proton gradient subsequently used for ATP formation. This chain is Photosystem II reaction center protein T, found in Drimys granadensis.